The sequence spans 245 residues: Probable GTP-binding protein EngB (245 aa).

In terms of domain architecture, EngB-type G spans 46–223 (DVPEIAFVGR…AQHLWDWAHP (178 aa)). GTP is bound by residues 54–61 (GRSNAGKS), 81–85 (GRTQS), 103–106 (DLPG), 173–176 (TKSD), and 202–204 (FSS). 2 residues coordinate Mg(2+): Ser-61 and Thr-83. The segment at 219–245 (DWAHPPEKPAKKPKAEPAAEAATGDEG) is disordered. Residues 222–235 (HPPEKPAKKPKAEP) show a composition bias toward basic and acidic residues. Residues 236–245 (AAEAATGDEG) are compositionally biased toward low complexity.

Belongs to the TRAFAC class TrmE-Era-EngA-EngB-Septin-like GTPase superfamily. EngB GTPase family. Mg(2+) serves as cofactor.

Its function is as follows. Necessary for normal cell division and for the maintenance of normal septation. This is Probable GTP-binding protein EngB from Polaromonas sp. (strain JS666 / ATCC BAA-500).